A 552-amino-acid chain; its full sequence is Segmentation polarity homeobox protein engrailed (552 aa).

The span at 93 to 108 (SGSGSPASCSTPASST) shows a compositional bias: low complexity. Disordered stretches follow at residues 93–112 (SGSGSPASCSTPASSTPLTI), 130–171 (THTT…TAKP), 309–419 (PAAP…GGKN), and 433–460 (DRPSSGPRYRRPKQPKDKTNDEKRPRTA). Acidic residues predominate over residues 135-151 (EEEEAEEDDDIDVDVDD). The segment covering 317 to 382 (PPLSSSASSL…SGSGVNASSP (66 aa)) has biased composition (low complexity). Basic and acidic residues predominate over residues 446–457 (QPKDKTNDEKRP). A DNA-binding region (homeobox) is located at residues 454-513 (EKRPRTAFSSEQLARLKREFNENRYLTERRRQQLSSELGLNEAQIKIWFQNKRAKIKKST).

The protein belongs to the engrailed homeobox family. In terms of processing, phosphorylated. Phosphorylation may directly or allosterically modify its function.

It is found in the nucleus. In terms of biological role, this protein specifies the body segmentation pattern. It is required for the development of the central nervous system. Transcriptional regulator that represses activated promoters. Wg signaling operates by inactivating the SGG repression of EN autoactivation. The chain is Segmentation polarity homeobox protein engrailed (en) from Drosophila melanogaster (Fruit fly).